Reading from the N-terminus, the 185-residue chain is Ribosome-recycling factor (185 aa).

It belongs to the RRF family.

The protein resides in the cytoplasm. In terms of biological role, responsible for the release of ribosomes from messenger RNA at the termination of protein biosynthesis. May increase the efficiency of translation by recycling ribosomes from one round of translation to another. The sequence is that of Ribosome-recycling factor from Enterobacter sp. (strain 638).